The primary structure comprises 529 residues: Interleukin-21 receptor (529 aa).

An N-terminal signal peptide occupies residues 1–19 (MPRGPVAALLLLILHGAWS). Disulfide bonds link Cys-20–Cys-109, Cys-25–Cys-35, and Cys-65–Cys-81. The Extracellular portion of the chain corresponds to 20-237 (CLDLTCYTDY…GEPEAGWDPH (218 aa)). 2 consecutive Fibronectin type-III domains span residues 21 to 118 (LDLT…AESI) and 119 to 228 (KPAP…TQAG). Asn-73, Asn-97, Asn-104, Asn-125, and Asn-182 each carry an N-linked (GlcNAc...) asparagine glycan. C-linked (Man) tryptophan glycosylation is present at Trp-214. The WSXWS motif signature appears at 214–218 (WSEWS). Residues 238–258 (MLLLLAVLIIVLVFMGLKIHL) traverse the membrane as a helical segment. At 259 to 529 (PWRLWKKIWA…PPVDSGAQSS (271 aa)) the chain is on the cytoplasmic side. A Box 1 motif motif is present at residues 266–274 (IWAPVPTPE). The tract at residues 458 to 529 (TADPTWRTGS…PPVDSGAQSS (72 aa)) is disordered.

Belongs to the type I cytokine receptor family. Type 4 subfamily. As to quaternary structure, heterodimer with the common gamma subunit. Associates with JAK1. Post-translationally, C-mannosylated at Trp-214 in the WSXWS motif, the sugar chain makes extensive hydrogen bonds with Asn-73 sugar, and bridges the two fibronectin domains transforming the V-shaped receptor into an A-frame. In terms of tissue distribution, selectively expressed in lymphoid tissues. Most highly expressed in thymus and spleen.

It is found in the membrane. This is a receptor for interleukin-21. The polypeptide is Interleukin-21 receptor (Il21r) (Mus musculus (Mouse)).